We begin with the raw amino-acid sequence, 291 residues long: MAVQVVQAVQAVHLESDAFLVCLNHALSTEKEEVMGLCIGELNDDIRSDSKFTYTGTEMRTVQEKMDTIRIVHIHSVIILRRSDKRKDRVEISPEQLSAASTEAERLAELTGRPMRVVGWYHSHPHITVWPSHVDVRTQAMYQMMDQGFVGLIFSCFIEDKNTKTGRVLYTCFQSIQAQKSSEYERIEIPIHIVPHITIGKVCLESAVELPKILCQEEQDAYRRIHSLTHLDSVTKIHNGSVFTKNLCSQMSAVSGPLLQWLEDRLEQNQQHLQELQQEKEELMEELSSLE.

Ala-2 bears the N-acetylalanine mark. The 168-residue stretch at 12-179 folds into the MPN domain; that stretch reads VHLESDAFLV…YTCFQSIQAQ (168 aa). 3 residues coordinate Zn(2+): His-122, His-124, and Asp-135. Residues 122-135 carry the JAMM motif motif; the sequence is HSHPHITVWPSHVD. The residue at position 233 (Ser-233) is a Phosphoserine.

It belongs to the peptidase M67A family. BRCC36 subfamily. As to quaternary structure, component of the ARISC complex, at least composed of UIMC1/RAP80, ABRAXAS1, BRCC3/BRCC36, BABAM2 and BABAM1/NBA1. Component of the BRCA1-A complex, at least composed of BRCA1, BARD1, UIMC1/RAP80, ABRAXAS1, BRCC3/BRCC36, BABAM2 and BABAM1/NBA1. In the BRCA1-A complex, interacts directly with ABRAXAS1 and BABAM2. Component of the BRISC complex, at least composed of ABRAXAS2, BRCC3/BRCC36, BABAM2 and BABAM1/NBA1. Identified in a complex with SHMT2 and the other subunits of the BRISC complex. In the BRISC complex, interacts directly with ABRAXAS2. Identified in a complex with ABRAXAS2 and NUMA1. The BRISC complex interacts with the CSN complex. Component of the BRCA1/BRCA2 containing complex (BRCC), which also contains BRCA1, BRCA2, BARD1, BABAM2 and RAD51. BRCC is a ubiquitin E3 ligase complex that enhances cellular survival following DNA damage. Interacts with BRCA1. Binds polyubiquitin. Interacts with PWWP2B. Interacts with HDAC1; this interaction is enhanced in the presence of PWWP2B. The cofactor is Zn(2+).

Its subcellular location is the nucleus. The protein resides in the cytoplasm. It localises to the cytoskeleton. The protein localises to the spindle pole. Metalloprotease that specifically cleaves 'Lys-63'-linked polyubiquitin chains. Does not have activity toward 'Lys-48'-linked polyubiquitin chains. Component of the BRCA1-A complex, a complex that specifically recognizes 'Lys-63'-linked ubiquitinated histones H2A and H2AX at DNA lesions sites, leading to target the BRCA1-BARD1 heterodimer to sites of DNA damage at double-strand breaks (DSBs). In the BRCA1-A complex, it specifically removes 'Lys-63'-linked ubiquitin on histones H2A and H2AX, antagonizing the RNF8-dependent ubiquitination at double-strand breaks (DSBs). Catalytic subunit of the BRISC complex, a multiprotein complex that specifically cleaves 'Lys-63'-linked ubiquitin in various substrates. Mediates the specific 'Lys-63'-specific deubiquitination associated with the COP9 signalosome complex (CSN), via the interaction of the BRISC complex with the CSN complex. The BRISC complex is required for normal mitotic spindle assembly and microtubule attachment to kinetochores via its role in deubiquitinating NUMA1. Plays a role in interferon signaling via its role in the deubiquitination of the interferon receptor IFNAR1; deubiquitination increases IFNAR1 activity by enhancing its stability and cell surface expression. Acts as a regulator of the NLRP3 inflammasome by mediating deubiquitination of NLRP3, leading to NLRP3 inflammasome assembly. Down-regulates the response to bacterial lipopolysaccharide (LPS) via its role in IFNAR1 deubiquitination. Deubiquitinates HDAC1 and PWWP2B leading to their stabilization. The chain is Lys-63-specific deubiquitinase BRCC36 (Brcc3) from Mus musculus (Mouse).